The following is a 318-amino-acid chain: Protein-L-histidine N-pros-methyltransferase (318 aa).

The N-terminal stretch at 1 to 18 (MRLLAGWLCLSLASVWLA) is a signal peptide. Asn35 carries an N-linked (GlcNAc...) asparagine glycan. Residues Glu174, Asn210, and Tyr295 each contribute to the S-adenosyl-L-homocysteine site.

The protein belongs to the METTL9 family.

The protein resides in the endoplasmic reticulum. Its subcellular location is the mitochondrion. The catalysed reaction is L-histidyl-[protein] + S-adenosyl-L-methionine = N(pros)-methyl-L-histidyl-[protein] + S-adenosyl-L-homocysteine + H(+). Protein-histidine N-methyltransferase that specifically catalyzes 1-methylhistidine (pros-methylhistidine) methylation of target proteins. Specifically methylates the second His of proteins with a His-x-His (HxH) motif (where 'x' is preferably a small amino acid), while exploiting the first one as a recognition signature. Catalyzes methylation of target proteins such as S100A9, NDUFB3, SLC39A5, SLC39A7, ARMC6 and DNAJB12; 1-methylhistidine modification may affect the binding of zinc and other metals to its target proteins. Constitutes the main methyltransferase for the 1-methylhistidine modification in cell. In Bos taurus (Bovine), this protein is Protein-L-histidine N-pros-methyltransferase.